The chain runs to 431 residues: MTSDCSSTHCSPESCGTASGCAPASSCSVETACLPGTCATSRCQTPSFLSRSRGLTGCLLPCYFTGSCNSPCLVGNCAWCEDGVFTSNEKETMQFLNDRLASYLEKVRSLEETNAELESRIQEQCEQDIPMVCPDYQRYFNTIEDLQQKILCTKAENSRLAVQLDNCKLATDDFKSKYESELSLRQLLEADISSLHGILEELTLCKSDLEAHVESLKEDLLCLKKNHEEEVNLLREQLGDRLSVELDTAPTLDLNRVLDEMRCQCETVLANNRREAEEWLAVQTEELNQQQLSSAEQLQGCQMEILELKRTASALEIELQAQQSLTESLECTVAETEAQYSSQLAQIQCLIDNLENQLAEIRCDLERQNQEYQVLLDVKARLEGEINTYWGLLDSEDSRLSCSPCSTTCTSSNTCEPCSAYVICTVENCCL.

The interval 1–89 is head; sequence MTSDCSSTHC…CEDGVFTSNE (89 aa). Residues 89 to 400 enclose the IF rod domain; that stretch reads EKETMQFLND…GLLDSEDSRL (312 aa). The coil 1A stretch occupies residues 90–124; it reads KETMQFLNDRLASYLEKVRSLEETNAELESRIQEQ. Residues 125–135 are linker 1; it reads CEQDIPMVCPD. Residues 136–236 are coil 1B; the sequence is YQRYFNTIED…HEEEVNLLRE (101 aa). The tract at residues 237–252 is linker 12; sequence QLGDRLSVELDTAPTL. Residues 253 to 396 are coil 2; the sequence is DLNRVLDEMR…NTYWGLLDSE (144 aa). Positions 397–431 are tail; the sequence is DSRLSCSPCSTTCTSSNTCEPCSAYVICTVENCCL.

It belongs to the intermediate filament family. Heterotetramer of two type I and two type II keratins. Expressed in skin and scalp. Also very weakly expressed in tongue, breast, colon and small intestine. In the hair follicle, it is specifically present in the upper hair cuticle. Not present in the upper cortex (at protein level).

Functionally, may play a role in late hair differentiation. This is Keratin, type I cytoskeletal 40 (KRT40) from Homo sapiens (Human).